Here is an 812-residue protein sequence, read N- to C-terminus: Endogenous retrovirus group K member 18 Pol protein (812 aa).

A Reverse transcriptase domain is found at 57 to 245; sequence LEKGHIEPSF…TPFHYLGMQI (189 aa). The LPQG signature appears at 161–164; sequence LPQG. The YXDD signature appears at 195 to 198; sequence YFDD. One can recognise an RNase H type-1 domain in the interval 460–590; it reads LENALTVFTD…ADLLVSSAFI (131 aa). Mg(2+) is bound by residues Asp-469, Glu-497, Asp-517, and Asp-582. Residues 587-628 form an Integrase-type zinc finger; that stretch reads SAFIKAQELHALTHVNAAGLKNKFDVTWKQAKDIVQHCTQCQ. Zn(2+) is bound by residues His-596, His-600, Cys-624, and Cys-627. The region spanning 637–803 is the Integrase catalytic domain; that stretch reads AGVNPEVCVL…TSAEHLTGKK (167 aa).

The protein belongs to the beta type-B retroviral polymerase family. HERV class-II K(HML-2) pol subfamily.

It carries out the reaction DNA(n) + a 2'-deoxyribonucleoside 5'-triphosphate = DNA(n+1) + diphosphate. The enzyme catalyses Endonucleolytic cleavage to 5'-phosphomonoester.. In terms of biological role, early post-infection, the reverse transcriptase converts the viral RNA genome into double-stranded viral DNA. The RNase H domain of the reverse transcriptase performs two functions. It degrades the RNA template and specifically removes the RNA primer from the RNA/DNA hybrid. Following nuclear import, the integrase catalyzes the insertion of the linear, double-stranded viral DNA into the host cell chromosome. Endogenous Pol proteins may have kept, lost or modified their original function during evolution. The chain is Endogenous retrovirus group K member 18 Pol protein (ERVK-18) from Homo sapiens (Human).